The following is a 478-amino-acid chain: Isoeugenol monooxygenase (478 aa).

Positions 167, 218, 282, and 471 each coordinate Fe cation.

This sequence belongs to the carotenoid oxygenase family. The cofactor is Fe(2+).

It carries out the reaction (E)-isoeugenol + O2 = vanillin + acetaldehyde. Inhibited by Co(2+), Ni(2+) and Zn(2+), which may inhibit enzyme activity by replacing iron in the catalytic residues. Inhibited by incubation with high concentrations of the iron chelators 1,10-phenanthroline and Tiron. However, iron is not completely removed by the chelators, suggesting that iron is tightly bound to the enzyme. Involved in isoeugenol degradation. Catalyzes the oxidative cleavage of the side chain double-bond of isoeugenol to form vanillin and acetaldehyde. The polypeptide is Isoeugenol monooxygenase (Pseudomonas nitroreducens).